A 382-amino-acid polypeptide reads, in one-letter code: Beta-1,4-galactosyltransferase 6 (382 aa).

Topologically, residues 1-15 are cytoplasmic; sequence MSALKRMMRVSNRSL. The chain crosses the membrane as a helical; Signal-anchor for type II membrane protein span at residues 16-35; sequence IAFIFFFSLSTSCLYFIYVA. Residues 36–382 lie on the Lumenal side of the membrane; the sequence is PGIANTYLFM…MPELAPVEDY (347 aa). N-linked (GlcNAc...) asparagine glycans are attached at residues asparagine 71, asparagine 75, asparagine 83, asparagine 84, asparagine 99, and asparagine 122. Cysteine 108 and cysteine 152 form a disulfide bridge. UDP-alpha-D-galactose is bound by residues 163 to 167, 202 to 204, 229 to 230, tyrosine 258, and tryptophan 290; these read PFRNR, FNR, and VD. Cysteines 223 and 242 form a disulfide. Aspartate 230 provides a ligand contact to Mn(2+). Position 292–295 (292–295) interacts with N-acetyl-D-glucosamine; the sequence is GEDD. The N-linked (GlcNAc...) asparagine glycan is linked to asparagine 307. Histidine 323 contributes to the Mn(2+) binding site. 323–324 serves as a coordination point for UDP-alpha-D-galactose; sequence HH. Arginine 334 contacts N-acetyl-D-glucosamine. Asparagine 367 carries an N-linked (GlcNAc...) asparagine glycan.

Belongs to the glycosyltransferase 7 family. The cofactor is Mn(2+). Requires Mg(2+) as cofactor. Ca(2+) serves as cofactor. As to expression, highest expression in brain with lower levels found in lungs, heart, skeletal muscle and kidney. Lowest expression in testis, liver and spleen.

The protein resides in the golgi apparatus. The protein localises to the golgi stack membrane. The enzyme catalyses a beta-D-glucosyl-(1&lt;-&gt;1')-N-acylsphing-4-enine + UDP-alpha-D-galactose = a beta-D-Gal-(1-&gt;4)-beta-D-Glc-(1&lt;-&gt;1)-Cer(d18:1(4E)) + UDP + H(+). Its pathway is protein modification; protein glycosylation. It participates in sphingolipid metabolism. With respect to regulation, inhibited by EDTA. Its function is as follows. Catalyzes the synthesis of lactosylceramide (LacCer) via the transfer of galactose from UDP-galactose to glucosylceramide (GlcCer). LacCer is the starting point in the biosynthesis of all gangliosides (membrane-bound glycosphingolipids) which play pivotal roles in the CNS including neuronal maturation and axonal and myelin formation. The protein is Beta-1,4-galactosyltransferase 6 of Rattus norvegicus (Rat).